Here is a 191-residue protein sequence, read N- to C-terminus: Flagellar transcriptional regulator FlhC (191 aa).

Cys-137, Cys-140, Cys-157, and Cys-160 together coordinate Zn(2+).

The protein belongs to the FlhC family. As to quaternary structure, heterohexamer composed of two FlhC and four FlhD subunits. Each FlhC binds a FlhD dimer, forming a heterotrimer, and a hexamer assembles by dimerization of two heterotrimers. It depends on Zn(2+) as a cofactor.

The protein resides in the cytoplasm. Its function is as follows. Functions in complex with FlhD as a master transcriptional regulator that regulates transcription of several flagellar and non-flagellar operons by binding to their promoter region. Activates expression of class 2 flagellar genes, including fliA, which is a flagellum-specific sigma factor that turns on the class 3 genes. Also regulates genes whose products function in a variety of physiological pathways. The polypeptide is Flagellar transcriptional regulator FlhC (Nitrosomonas eutropha (strain DSM 101675 / C91 / Nm57)).